We begin with the raw amino-acid sequence, 313 residues long: Ribosomal protein L11 methyltransferase (313 aa).

Positions 154, 179, 201, and 242 each coordinate S-adenosyl-L-methionine.

It belongs to the methyltransferase superfamily. PrmA family.

The protein resides in the cytoplasm. It carries out the reaction L-lysyl-[protein] + 3 S-adenosyl-L-methionine = N(6),N(6),N(6)-trimethyl-L-lysyl-[protein] + 3 S-adenosyl-L-homocysteine + 3 H(+). In terms of biological role, methylates ribosomal protein L11. This Xanthomonas oryzae pv. oryzae (strain MAFF 311018) protein is Ribosomal protein L11 methyltransferase.